The chain runs to 186 residues: Ribosome-recycling factor (186 aa).

The protein belongs to the RRF family.

It localises to the cytoplasm. Its function is as follows. Responsible for the release of ribosomes from messenger RNA at the termination of protein biosynthesis. May increase the efficiency of translation by recycling ribosomes from one round of translation to another. The chain is Ribosome-recycling factor from Pelodictyon phaeoclathratiforme (strain DSM 5477 / BU-1).